The following is a 465-amino-acid chain: Ribulose bisphosphate carboxylase large chain (465 aa).

Lys4 carries the post-translational modification N6,N6,N6-trimethyllysine. The substrate site is built by Asn113 and Thr163. The Proton acceptor role is filled by Lys165. Lys167 is a binding site for substrate. The Mg(2+) site is built by Lys191, Asp193, and Glu194. Lys191 is subject to N6-carboxylysine. His284 acts as the Proton acceptor in catalysis. Arg285, His317, and Ser369 together coordinate substrate.

The protein belongs to the RuBisCO large chain family. Type I subfamily. In terms of assembly, heterohexadecamer of 8 large chains and 8 small chains; disulfide-linked. The disulfide link is formed within the large subunit homodimers. The cofactor is Mg(2+). In terms of processing, the disulfide bond which can form in the large chain dimeric partners within the hexadecamer appears to be associated with oxidative stress and protein turnover.

Its subcellular location is the plastid. It is found in the chloroplast. It catalyses the reaction 2 (2R)-3-phosphoglycerate + 2 H(+) = D-ribulose 1,5-bisphosphate + CO2 + H2O. The catalysed reaction is D-ribulose 1,5-bisphosphate + O2 = 2-phosphoglycolate + (2R)-3-phosphoglycerate + 2 H(+). RuBisCO catalyzes two reactions: the carboxylation of D-ribulose 1,5-bisphosphate, the primary event in carbon dioxide fixation, as well as the oxidative fragmentation of the pentose substrate in the photorespiration process. Both reactions occur simultaneously and in competition at the same active site. The chain is Ribulose bisphosphate carboxylase large chain from Epacris sp.